Here is a 79-residue protein sequence, read N- to C-terminus: ATP synthase subunit c (79 aa).

A run of 2 helical transmembrane segments spans residues 11-31 and 53-73; these read MAAAIMMGLAAIGAAIGIGIL and FFIVMGLVDAIPMIAVGLGLY.

Belongs to the ATPase C chain family. In terms of assembly, F-type ATPases have 2 components, F(1) - the catalytic core - and F(0) - the membrane proton channel. F(1) has five subunits: alpha(3), beta(3), gamma(1), delta(1), epsilon(1). F(0) has three main subunits: a(1), b(2) and c(10-14). The alpha and beta chains form an alternating ring which encloses part of the gamma chain. F(1) is attached to F(0) by a central stalk formed by the gamma and epsilon chains, while a peripheral stalk is formed by the delta and b chains.

It localises to the cell inner membrane. Its function is as follows. F(1)F(0) ATP synthase produces ATP from ADP in the presence of a proton or sodium gradient. F-type ATPases consist of two structural domains, F(1) containing the extramembraneous catalytic core and F(0) containing the membrane proton channel, linked together by a central stalk and a peripheral stalk. During catalysis, ATP synthesis in the catalytic domain of F(1) is coupled via a rotary mechanism of the central stalk subunits to proton translocation. Functionally, key component of the F(0) channel; it plays a direct role in translocation across the membrane. A homomeric c-ring of between 10-14 subunits forms the central stalk rotor element with the F(1) delta and epsilon subunits. In Proteus mirabilis (strain HI4320), this protein is ATP synthase subunit c.